The primary structure comprises 99 residues: DNA-binding protein Fis (99 aa).

The segment at residues 75-94 is a DNA-binding region (H-T-H motif); sequence QTRAAIMMGINRGTLRKKLK.

Belongs to the transcriptional regulatory Fis family. Homodimer.

In terms of biological role, activates ribosomal RNA transcription. Plays a direct role in upstream activation of rRNA promoters. This Tolumonas auensis (strain DSM 9187 / NBRC 110442 / TA 4) protein is DNA-binding protein Fis.